The primary structure comprises 469 residues: Glutamine synthetase (469 aa).

In terms of domain architecture, GS beta-grasp spans 15-96 (NDVKFIDVRF…INFFIHDPIT (82 aa)). Residues 104 to 469 (PRNIAKKAEA…PHEFELYFDI (366 aa)) form the GS catalytic domain. 2 residues coordinate Mg(2+): Glu-129 and Glu-131. Glu-205 contacts ATP. Residues Glu-210 and Glu-218 each contribute to the Mg(2+) site. 221 to 223 (YKF) serves as a coordination point for ATP. Residues 262–263 (NG) and Gly-263 contribute to the L-glutamate site. His-267 is a Mg(2+) binding site. Residues 269–271 (HQS) and Ser-271 contribute to the ATP site. Arg-320, Glu-326, and Arg-338 together coordinate L-glutamate. 3 residues coordinate ATP: Arg-338, Arg-343, and Lys-352. Glu-357 serves as a coordination point for Mg(2+). Arg-359 is an L-glutamate binding site. Position 397 is an O-AMP-tyrosine (Tyr-397).

It belongs to the glutamine synthetase family. As to quaternary structure, oligomer of 12 subunits arranged in the form of two hexagons. It depends on Mg(2+) as a cofactor.

The protein resides in the cytoplasm. It catalyses the reaction L-glutamate + NH4(+) + ATP = L-glutamine + ADP + phosphate + H(+). The activity of this enzyme could be controlled by adenylation under conditions of abundant glutamine. Catalyzes the ATP-dependent biosynthesis of glutamine from glutamate and ammonia. The polypeptide is Glutamine synthetase (Streptomyces filamentosus (Streptomyces roseosporus)).